The primary structure comprises 161 residues: 2-C-methyl-D-erythritol 2,4-cyclodiphosphate synthase (161 aa).

Residues aspartate 10 and histidine 12 each coordinate a divalent metal cation. 4-CDP-2-C-methyl-D-erythritol 2-phosphate-binding positions include aspartate 10–histidine 12 and histidine 36–serine 37. Position 44 (histidine 44) interacts with a divalent metal cation. 4-CDP-2-C-methyl-D-erythritol 2-phosphate is bound by residues aspartate 58–glycine 60, phenylalanine 63–aspartate 67, alanine 102–leucine 108, threonine 134–glutamate 137, phenylalanine 141, and arginine 144.

The protein belongs to the IspF family. In terms of assembly, homotrimer. Requires a divalent metal cation as cofactor.

The catalysed reaction is 4-CDP-2-C-methyl-D-erythritol 2-phosphate = 2-C-methyl-D-erythritol 2,4-cyclic diphosphate + CMP. The protein operates within isoprenoid biosynthesis; isopentenyl diphosphate biosynthesis via DXP pathway; isopentenyl diphosphate from 1-deoxy-D-xylulose 5-phosphate: step 4/6. Functionally, involved in the biosynthesis of isopentenyl diphosphate (IPP) and dimethylallyl diphosphate (DMAPP), two major building blocks of isoprenoid compounds. Catalyzes the conversion of 4-diphosphocytidyl-2-C-methyl-D-erythritol 2-phosphate (CDP-ME2P) to 2-C-methyl-D-erythritol 2,4-cyclodiphosphate (ME-CPP) with a corresponding release of cytidine 5-monophosphate (CMP). The chain is 2-C-methyl-D-erythritol 2,4-cyclodiphosphate synthase from Shewanella loihica (strain ATCC BAA-1088 / PV-4).